The sequence spans 348 residues: GTPase Obg (348 aa).

The Obg domain maps to 1–159; the sequence is MKFVDEVKVH…RELVLELKLM (159 aa). The region spanning 160–331 is the OBG-type G domain; sequence ADVGLVGLPN…LLSALVRILS (172 aa). GTP contacts are provided by residues 166-173, 191-195, 213-216, 283-286, and 312-314; these read GLPNAGKS, FTTLI, DIPG, NKVD, and SAR. 2 residues coordinate Mg(2+): serine 173 and threonine 193.

The protein belongs to the TRAFAC class OBG-HflX-like GTPase superfamily. OBG GTPase family. In terms of assembly, monomer. The cofactor is Mg(2+).

The protein localises to the cytoplasm. Its function is as follows. An essential GTPase which binds GTP, GDP and possibly (p)ppGpp with moderate affinity, with high nucleotide exchange rates and a fairly low GTP hydrolysis rate. Plays a role in control of the cell cycle, stress response, ribosome biogenesis and in those bacteria that undergo differentiation, in morphogenesis control. The protein is GTPase Obg of Syntrophobacter fumaroxidans (strain DSM 10017 / MPOB).